The primary structure comprises 787 residues: Pyridoxal-dependent decarboxylase domain-containing protein 1 (787 aa).

Residues 26 to 44 (MLEKSPRRTEEENGKKPVS) show a composition bias toward basic and acidic residues. The interval 26 to 52 (MLEKSPRRTEEENGKKPVSEDIPGPLQ) is disordered. S652 carries the phosphoserine modification. Positions 682–787 (QGTGVTPPPT…SQVEELERLR (106 aa)) are disordered. 2 positions are modified to phosphothreonine: T687 and T691. Residues S710, S718, S722, and S748 each carry the phosphoserine modification. The segment covering 725–748 (HIEDLEKVEQLSSGLEHDNLEAHS) has biased composition (basic and acidic residues). Polar residues predominate over residues 759 to 771 (TARQTEALQNQAQ). Over residues 772-787 (HQEDDHSQVEELERLR) the composition is skewed to basic and acidic residues. Residue S778 is modified to Phosphoserine.

This sequence belongs to the group II decarboxylase family. It depends on pyridoxal 5'-phosphate as a cofactor.

The chain is Pyridoxal-dependent decarboxylase domain-containing protein 1 (Pdxdc1) from Mus musculus (Mouse).